The primary structure comprises 688 residues: Eukaryotic translation initiation factor 3 subunit B (688 aa).

The disordered stretch occupies residues 1–32; that stretch reads MAKKKGENYDSDGGDDQDYDEEPNFDDPEGFV. Residues 9-32 are compositionally biased toward acidic residues; that stretch reads YDSDGGDDQDYDEEPNFDDPEGFV. In terms of domain architecture, RRM spans 57–141; sequence NVIVVDNIPV…HTLLVNLFSD (85 aa). 6 WD repeats span residues 208-246, 247-287, 291-329, 332-367, 440-482, and 527-572; these read RDRF…KINK, FPHS…EKRS, DGTS…LLDK, IKVQ…TLLE, EVKE…EPTM, and GDHF…KRVN. Residues 613-642 are a coiled coil; that stretch reads RIRMTRASKELLEKRAKLREQFVEYRTKRV.

The protein belongs to the eIF-3 subunit B family. Component of the eukaryotic translation initiation factor 3 (eIF-3) complex.

It is found in the cytoplasm. Functionally, RNA-binding component of the eukaryotic translation initiation factor 3 (eIF-3) complex, which is involved in protein synthesis of a specialized repertoire of mRNAs and, together with other initiation factors, stimulates binding of mRNA and methionyl-tRNAi to the 40S ribosome. The eIF-3 complex specifically targets and initiates translation of a subset of mRNAs involved in cell proliferation. The sequence is that of Eukaryotic translation initiation factor 3 subunit B from Aedes aegypti (Yellowfever mosquito).